The primary structure comprises 277 residues: Energy-coupling factor transporter ATP-binding protein EcfA (277 aa).

In terms of domain architecture, ABC transporter spans leucine 4–aspartate 238. ATP is bound at residue glycine 37–serine 44.

The protein belongs to the ABC transporter superfamily. Energy-coupling factor EcfA family. In terms of assembly, forms a stable energy-coupling factor (ECF) transporter complex composed of 2 membrane-embedded substrate-binding proteins (S component), 2 ATP-binding proteins (A component) and 2 transmembrane proteins (T component).

Its subcellular location is the cell membrane. Its function is as follows. ATP-binding (A) component of a common energy-coupling factor (ECF) ABC-transporter complex. Unlike classic ABC transporters this ECF transporter provides the energy necessary to transport a number of different substrates. The sequence is that of Energy-coupling factor transporter ATP-binding protein EcfA from Methanoculleus marisnigri (strain ATCC 35101 / DSM 1498 / JR1).